We begin with the raw amino-acid sequence, 422 residues long: Protein phosphatase methylesterase 1 (422 aa).

The segment at 1 to 27 (MSDMFRKSVLNKLPHLPPTRAPWADES) is disordered. Residues Ser-207, Asp-234, and His-371 contribute to the active site.

The protein belongs to the AB hydrolase superfamily.

The catalysed reaction is [phosphatase 2A protein]-C-terminal L-leucine methyl ester + H2O = [phosphatase 2A protein]-C-terminal L-leucine + methanol + H(+). Demethylates proteins that have been reversibly carboxymethylated. Demethylates the phosphatase PP2A catalytic subunit. The chain is Protein phosphatase methylesterase 1 (PPE1) from Cryptococcus neoformans var. neoformans serotype D (strain B-3501A) (Filobasidiella neoformans).